We begin with the raw amino-acid sequence, 157 residues long: N5-carboxyaminoimidazole ribonucleotide mutase (157 aa).

Substrate is bound by residues S8, D11, and R38.

The protein belongs to the AIR carboxylase family. Class I subfamily.

The enzyme catalyses 5-carboxyamino-1-(5-phospho-D-ribosyl)imidazole + H(+) = 5-amino-1-(5-phospho-D-ribosyl)imidazole-4-carboxylate. It participates in purine metabolism; IMP biosynthesis via de novo pathway; 5-amino-1-(5-phospho-D-ribosyl)imidazole-4-carboxylate from 5-amino-1-(5-phospho-D-ribosyl)imidazole (N5-CAIR route): step 2/2. Functionally, catalyzes the conversion of N5-carboxyaminoimidazole ribonucleotide (N5-CAIR) to 4-carboxy-5-aminoimidazole ribonucleotide (CAIR). In Methanocaldococcus jannaschii (strain ATCC 43067 / DSM 2661 / JAL-1 / JCM 10045 / NBRC 100440) (Methanococcus jannaschii), this protein is N5-carboxyaminoimidazole ribonucleotide mutase.